The following is a 259-amino-acid chain: UPF0246 protein Avin_11220 (259 aa).

Belongs to the UPF0246 family.

This chain is UPF0246 protein Avin_11220, found in Azotobacter vinelandii (strain DJ / ATCC BAA-1303).